Here is a 915-residue protein sequence, read N- to C-terminus: Alanine--tRNA ligase (915 aa).

Residues His609, His613, Cys712, and His716 each contribute to the Zn(2+) site.

This sequence belongs to the class-II aminoacyl-tRNA synthetase family. The cofactor is Zn(2+).

Its subcellular location is the cytoplasm. It carries out the reaction tRNA(Ala) + L-alanine + ATP = L-alanyl-tRNA(Ala) + AMP + diphosphate. Catalyzes the attachment of alanine to tRNA(Ala) in a two-step reaction: alanine is first activated by ATP to form Ala-AMP and then transferred to the acceptor end of tRNA(Ala). Also edits incorrectly charged Ser-tRNA(Ala) and Gly-tRNA(Ala) via its editing domain. This Methanoculleus marisnigri (strain ATCC 35101 / DSM 1498 / JR1) protein is Alanine--tRNA ligase.